The following is a 306-amino-acid chain: Ribonuclease Z (306 aa).

7 residues coordinate Zn(2+): histidine 63, histidine 65, aspartate 67, histidine 68, histidine 140, aspartate 211, and histidine 269. Aspartate 67 serves as the catalytic Proton acceptor.

This sequence belongs to the RNase Z family. Homodimer. Zn(2+) is required as a cofactor.

The catalysed reaction is Endonucleolytic cleavage of RNA, removing extra 3' nucleotides from tRNA precursor, generating 3' termini of tRNAs. A 3'-hydroxy group is left at the tRNA terminus and a 5'-phosphoryl group is left at the trailer molecule.. Zinc phosphodiesterase, which displays some tRNA 3'-processing endonuclease activity. Probably involved in tRNA maturation, by removing a 3'-trailer from precursor tRNA. The chain is Ribonuclease Z from Listeria monocytogenes serovar 1/2a (strain ATCC BAA-679 / EGD-e).